We begin with the raw amino-acid sequence, 192 residues long: Phosphoheptose isomerase (192 aa).

Residues 37-192 form the SIS domain; that stretch reads LADSFKAGGK…IQLIEKEMVK (156 aa). 52–54 contributes to the substrate binding site; the sequence is NGG. Zn(2+) is bound by residues His-61 and Glu-65. Residues Glu-65, 93 to 94, 119 to 121, Ser-124, and Gln-172 each bind substrate; these read ND and STS. Residues Gln-172 and His-180 each contribute to the Zn(2+) site.

The protein belongs to the SIS family. GmhA subfamily. As to quaternary structure, homotetramer. Requires Zn(2+) as cofactor.

The protein localises to the cytoplasm. The enzyme catalyses 2 D-sedoheptulose 7-phosphate = D-glycero-alpha-D-manno-heptose 7-phosphate + D-glycero-beta-D-manno-heptose 7-phosphate. It participates in carbohydrate biosynthesis; D-glycero-D-manno-heptose 7-phosphate biosynthesis; D-glycero-alpha-D-manno-heptose 7-phosphate and D-glycero-beta-D-manno-heptose 7-phosphate from sedoheptulose 7-phosphate: step 1/1. In terms of biological role, catalyzes the isomerization of sedoheptulose 7-phosphate in D-glycero-D-manno-heptose 7-phosphate. This chain is Phosphoheptose isomerase, found in Shigella dysenteriae serotype 1 (strain Sd197).